Here is a 225-residue protein sequence, read N- to C-terminus: mRNA-decapping protein D10 (225 aa).

In terms of domain architecture, Nudix hydrolase spans 35-218 (AKYPLSVIGI…NVIKYIINAV (184 aa)). The short motif at 116 to 137 (GKIKDLESITNCLVREIKEELN) is the Nudix box element. A Mg(2+)-binding site is contributed by Glu122. Glu131 (nucleophile) is an active-site residue. Residue Glu135 coordinates Mn(2+). Asp157 is a binding site for Mg(2+).

Belongs to the Nudix hydrolase family. It depends on Mg(2+) as a cofactor. Requires Mn(2+) as cofactor.

Functionally, decapping enzyme required for the removal of the 5'-end m7GpppN cap tethered to viral and host mRNAs to allow their decay in cells. May therefore accelerate viral and cellular mRNA turnover to eliminate competing host mRNAs and allow stage-specific synthesis of viral proteins. Acceleration of the turnover of cellular transcripts may even promote the shutoff of host protein synthesis. This is mRNA-decapping protein D10 from Fowlpox virus (strain NVSL) (FPV).